Here is a 402-residue protein sequence, read N- to C-terminus: Propionate kinase (402 aa).

Residues asparagine 11 and lysine 18 each coordinate ATP. Asparagine 11 lines the Mg(2+) pocket. Residue arginine 86 coordinates substrate. The active-site Proton donor/acceptor is the aspartate 143. Residues histidine 175, histidine 203–glycine 207, aspartate 278–arginine 280, and glycine 326–asparagine 330 contribute to the ATP site.

Belongs to the acetokinase family. TdcD subfamily. In terms of assembly, homodimer. The cofactor is Mg(2+).

It carries out the reaction propanoate + ATP = propanoyl phosphate + ADP. Its pathway is amino-acid degradation; L-threonine degradation via propanoate pathway; propanoate from L-threonine: step 4/4. Catalyzes the conversion of propionyl phosphate and ADP to propionate and ATP. In Salmonella typhimurium (strain D23580), this protein is Propionate kinase.